The chain runs to 386 residues: ADP,ATP carrier protein 1, mitochondrial (386 aa).

A mitochondrion-targeting transit peptide spans 1-76; it reads MDQVQHPSVM…PSTASAICVQ (76 aa). 3 Solcar repeats span residues 84–177, 189–281, and 289–375; these read SSFA…FKRL, KWFA…LKPV, and DSFF…LQLI. 5 helical membrane-spanning segments follow: residues 86–113, 154–178, 187–207, 257–278, and 292–312; these read FAIDFLMGGVSAAVSKTAAAPIERVKLL, TANVIRYFPTQALNFAFKDYFKRLF, YWKWFAGNLASGGAAGASSLL, FNISCVGIIVYRGLYFGMYDSL, and FASFVLGWLITNGAALASYPI. Residues Arg159 and Lys171 each contribute to the ADP site. Arg316 serves as a coordination point for ADP. An important for transport activity region spans residues 316 to 321; it reads RRRMMM. The Nucleotide carrier signature motif signature appears at 316 to 321; sequence RRRMMM. Residues 352–372 traverse the membrane as a helical segment; that stretch reads AGSNILRAIAGAGVLAGYDKL.

The protein belongs to the mitochondrial carrier (TC 2.A.29) family. Monomer.

The protein localises to the mitochondrion inner membrane. The catalysed reaction is ADP(in) + ATP(out) = ADP(out) + ATP(in). The matrix-open state (m-state) is inhibited by the membrane-permeable bongkrekic acid (BKA). The cytoplasmic-open state (c-state) is inhibited by the membrane-impermeable toxic inhibitor carboxyatractyloside (CATR). ADP:ATP antiporter that mediates import of ADP into the mitochondrial matrix for ATP synthesis, and export of ATP out to fuel the cell. Cycles between the cytoplasmic-open state (c-state) and the matrix-open state (m-state): operates by the alternating access mechanism with a single substrate-binding site intermittently exposed to either the cytosolic (c-state) or matrix (m-state) side of the inner mitochondrial membrane. The sequence is that of ADP,ATP carrier protein 1, mitochondrial (ANT1) from Gossypium hirsutum (Upland cotton).